A 112-amino-acid polypeptide reads, in one-letter code: Hydrogenase maturation factor HypA (112 aa).

Residue histidine 2 coordinates Ni(2+). Zn(2+) contacts are provided by cysteine 73, cysteine 76, cysteine 88, and cysteine 91.

The protein belongs to the HypA/HybF family.

Its function is as follows. Involved in the maturation of [NiFe] hydrogenases. Required for nickel insertion into the metal center of the hydrogenase. The protein is Hydrogenase maturation factor HypA of Synechococcus elongatus (strain ATCC 33912 / PCC 7942 / FACHB-805) (Anacystis nidulans R2).